We begin with the raw amino-acid sequence, 127 residues long: Aspartate 1-decarboxylase (127 aa).

Serine 25 serves as the catalytic Schiff-base intermediate with substrate; via pyruvic acid. Serine 25 bears the Pyruvic acid (Ser) mark. Threonine 57 is a substrate binding site. Tyrosine 58 functions as the Proton donor in the catalytic mechanism. 73 to 75 (GAA) lines the substrate pocket.

The protein belongs to the PanD family. In terms of assembly, heterooctamer of four alpha and four beta subunits. Pyruvate is required as a cofactor. Post-translationally, is synthesized initially as an inactive proenzyme, which is activated by self-cleavage at a specific serine bond to produce a beta-subunit with a hydroxyl group at its C-terminus and an alpha-subunit with a pyruvoyl group at its N-terminus.

The protein localises to the cytoplasm. It catalyses the reaction L-aspartate + H(+) = beta-alanine + CO2. It participates in cofactor biosynthesis; (R)-pantothenate biosynthesis; beta-alanine from L-aspartate: step 1/1. Catalyzes the pyruvoyl-dependent decarboxylation of aspartate to produce beta-alanine. The sequence is that of Aspartate 1-decarboxylase from Clostridium acetobutylicum (strain ATCC 824 / DSM 792 / JCM 1419 / IAM 19013 / LMG 5710 / NBRC 13948 / NRRL B-527 / VKM B-1787 / 2291 / W).